The chain runs to 109 residues: LSM2-LSM8 complex subunit LSM8 (109 aa).

The Sm domain occupies 1 to 70 (MSATLKDYLN…IALVGLIDAE (70 aa)).

The protein belongs to the snRNP Sm proteins family. In terms of assembly, component of the heptameric LSM2-LSM8 complex that forms a seven-membered ring structure with a donut shape; an RNA strand can pass through the hole in the center of the ring structure. The LSm subunits are arranged in the order LSM8, LSM2, LSM3, LSM6, LSM5, LSM7 and LSM4. Component of the spliceosome U4/U6-U5 tri-snRNP complex composed of the U4, U6 and U5 snRNAs and at least PRP3, PRP4, PRP6, PRP8, PRP18, PRP31, PRP38, SNU13, SNU23, SNU66, SNU114, SPP381, SMB1, SMD1, SMD2, SMD3, SMX2, SMX3, LSM2, LSM3, LSM4, LSM5, LSM6, LSM7, LSM8, BRR2 and DIB1.

It is found in the nucleus. It localises to the cytoplasm. In terms of biological role, component of the nuclear LSM2-LSM8 complex, which is involved in spliceosome assembly. The LSM2-LSM8 complex plays a role in the biogenesis of the spliceosomal U4/U6-U5 tri-snRNP complex by accelerating PRP24-mediated annealing of U4/U6 di-snRNA. The LSM2-LSM8 complex binds U6 snRNA terminating with a non-cyclic 3' phosphate group. LSM2-LSM8 is probably also involved in degradation of nuclear pre-mRNA by targeting them for decapping. LSM2-LSM8 could be involved in processing of pre-tRNAs, pre-rRNAs and U3 snoRNA, although involvement may be indirect. In Saccharomyces cerevisiae (strain ATCC 204508 / S288c) (Baker's yeast), this protein is LSM2-LSM8 complex subunit LSM8 (LSM8).